Here is a 279-residue protein sequence, read N- to C-terminus: Acetylglutamate kinase (279 aa).

Substrate is bound by residues 64 to 65 (GG), Arg86, and Asn177.

Belongs to the acetylglutamate kinase family. ArgB subfamily.

It is found in the cytoplasm. It catalyses the reaction N-acetyl-L-glutamate + ATP = N-acetyl-L-glutamyl 5-phosphate + ADP. The protein operates within amino-acid biosynthesis; L-arginine biosynthesis; N(2)-acetyl-L-ornithine from L-glutamate: step 2/4. Functionally, catalyzes the ATP-dependent phosphorylation of N-acetyl-L-glutamate. The chain is Acetylglutamate kinase from Campylobacter jejuni subsp. jejuni serotype O:23/36 (strain 81-176).